Reading from the N-terminus, the 341-residue chain is Trans-3-hydroxy-L-proline dehydratase (341 aa).

The Proton acceptor role is filled by S90. Residues G91–S92, D252, and G257–T258 each bind substrate.

Belongs to the proline racemase family.

The enzyme catalyses trans-3-hydroxy-L-proline = 1-pyrroline-2-carboxylate + H2O. Its function is as follows. Catalyzes the dehydration of trans-3-hydroxy-L-proline (t3LHyp) to Delta(1)-pyrroline-2-carboxylate (Pyr2C). May be involved in a degradation pathway of t3LHyp, which would allow L.aggregata to grow on t3LHyp as a sole carbon source. Displays neither proline racemase activity nor 4-hydroxyproline 2-epimerase activity. In Roseibium aggregatum (strain ATCC 25650 / DSM 13394 / JCM 20685 / NBRC 16684 / NCIMB 2208 / IAM 12614 / B1) (Stappia aggregata), this protein is Trans-3-hydroxy-L-proline dehydratase.